The following is a 632-amino-acid chain: Polygalacturonase non-catalytic subunit AroGP3 (632 aa).

Residues methionine 1 to alanine 27 form the signal peptide. Residues lysine 28–leucine 109 constitute a propeptide that is removed on maturation. Residues asparagine 125, asparagine 143, asparagine 258, asparagine 280, asparagine 336, asparagine 371, and asparagine 389 are each glycosylated (N-linked (GlcNAc...) asparagine). Residues phenylalanine 417–alanine 631 enclose the BURP domain.

In terms of assembly, interacts with polygalacturonase to form heterodimers.

Its subcellular location is the secreted. It is found in the extracellular space. The protein resides in the apoplast. It localises to the cell wall. Non-catalytic subunit of polygalacturonase. The chain is Polygalacturonase non-catalytic subunit AroGP3 (GP3) from Solanum lycopersicum (Tomato).